A 224-amino-acid polypeptide reads, in one-letter code: Ribonuclease 3 (224 aa).

The RNase III domain maps to 5 to 127 (LERLCRRLNY…ILAAIYLDGG (123 aa)). Glu40 provides a ligand contact to Mg(2+). Residue Asp44 is part of the active site. The Mg(2+) site is built by Asp113 and Glu116. The active site involves Glu116. Residues 154–224 (DAKTQLQEFL…AKAMLEQLQG (71 aa)) enclose the DRBM domain.

This sequence belongs to the ribonuclease III family. Homodimer. The cofactor is Mg(2+).

It localises to the cytoplasm. The enzyme catalyses Endonucleolytic cleavage to 5'-phosphomonoester.. Digests double-stranded RNA. Involved in the processing of primary rRNA transcript to yield the immediate precursors to the large and small rRNAs (23S and 16S). Processes some mRNAs, and tRNAs when they are encoded in the rRNA operon. Processes pre-crRNA and tracrRNA of type II CRISPR loci if present in the organism. This is Ribonuclease 3 from Legionella pneumophila (strain Lens).